The sequence spans 837 residues: Striatin-interacting protein 1 (837 aa).

Met-1 bears the N-acetylmethionine mark. The tract at residues 1–67 (MEPAAGTPGP…DSEGYSESPD (67 aa)) is disordered. A compositionally biased stretch (pro residues) spans 18–35 (PQPPPPPPPATAQPPPGA). Over residues 47-60 (KAREFNRNQRKDSE) the composition is skewed to basic and acidic residues. Phosphoserine is present on residues Ser-59, Ser-335, and Ser-339. A disordered region spans residues 336 to 423 (PPASASDLIE…DRLTCPKGLP (88 aa)). Residues 356-377 (KALIKQDNLDAFNERDPYKADD) are compositionally biased toward basic and acidic residues. Residues 378-391 (SREEEEENDDDNSL) are compositionally biased toward acidic residues. Phosphoserine is present on Ser-788. The segment at 796-837 (DNCLQSVLGQRVDLPEDFQMNYDLWLEREVFSKPISWEELLQ) is required for STRIPAK core complex formation.

This sequence belongs to the STRIP family. In terms of assembly, part of the core of STRIPAK complexes composed of PP2A catalytic and scaffolding subunits, the striatins (PP2A regulatory subunits), the striatin-associated proteins MOB4, STRIP1 and STRIP2, PDCD10 and members of the STE20 kinases, such as STK24 and STK26. The STRIPAK complex can be extended by adapter proteins such as SLMAP:SIKE1, CTTNBP2 or CTTNBP2NL. Interacts with CDC42BPB. Interacts with CTTNBP2NL.

The protein localises to the cytoplasm. Its function is as follows. Plays a role in the regulation of cell morphology and cytoskeletal organization. Required in the cortical actin filament dynamics and cell shape. Part of the striatin-interacting phosphatase and kinase (STRIPAK) complexes. STRIPAK complexes have critical roles in protein (de)phosphorylation and are regulators of multiple signaling pathways including Hippo, MAPK, nuclear receptor and cytoskeleton remodeling. Different types of STRIPAK complexes are involved in a variety of biological processes such as cell growth, differentiation, apoptosis, metabolism and immune regulation. The chain is Striatin-interacting protein 1 (STRIP1) from Bos taurus (Bovine).